We begin with the raw amino-acid sequence, 209 residues long: uncharacterized protein (209 aa).

The protein belongs to the flavoredoxin family. FMN serves as cofactor.

This is an uncharacterized protein from Halalkalibacterium halodurans (strain ATCC BAA-125 / DSM 18197 / FERM 7344 / JCM 9153 / C-125) (Bacillus halodurans).